The chain runs to 796 residues: Transcription factor kayak (796 aa).

4 disordered regions span residues Ala-109–Ser-132, Val-315–Val-341, Phe-374–Gly-429, and Val-442–Leu-490. The span at Thr-402–Gly-429 shows a compositional bias: low complexity. A compositionally biased stretch (polar residues) spans Arg-447 to Thr-457. The 64-residue stretch at Glu-478–His-541 folds into the bZIP domain. The basic motif stretch occupies residues Lys-480–Arg-499. Residues Leu-506–Leu-534 form a leucine-zipper region. Residues Ser-569 to Ser-601 are disordered. Position 621 is a phosphoserine (Ser-621). Disordered stretches follow at residues Pro-642–Ala-661 and Ser-774–Leu-796.

Belongs to the bZIP family. Fos subfamily. As to quaternary structure, homodimer. Heterodimer with Jra. The kay-Jra heterodimer binds more stably to the AP-1 site than either of the two proteins alone.

The protein localises to the nucleus. Developmentally regulated transcription factor AP-1 binds and recognizes the enhancer DNA sequence: 5'-TGA[CG]TCA-3'. May play a role in the function or determination of a particular subset of cells in the developing embryo. It is able to carry out its function either independently of or in conjunction with Jra. This Drosophila grimshawi (Hawaiian fruit fly) protein is Transcription factor kayak.